The primary structure comprises 424 residues: Protein maelstrom 1 (424 aa).

The segment at residues 2-69 (PPKKHSGFMM…LTRVKKERLN (68 aa)) is a DNA-binding region (HMG box).

The protein belongs to the maelstrom family.

Its subcellular location is the cytoplasm. The protein resides in the nucleus. In terms of biological role, involved both in the piRNA and miRNA metabolic processes. As a component of the meiotic nuage, plays a central role during oogenesis by repressing transposable elements and preventing their mobilization, which is essential for the germline integrity. Repression of transposable elements is mediated via the piRNA metabolic process, which mediates the repression of transposable elements during meiosis by forming complexes composed of piRNAs and Piwi proteins and governs the repression of transposons. As a nuclear component, it is required for proper differentiation in the germline stem cell (GSC) lineage by repressing microRNA-7 (miR-7), thereby acting as an indirect regulator of bag-of-marbles (Bam). Acts by binding to the promoter of miR-7 gene and repressing its expression; miR-7 repression alleviates the Bam repression by miR-7, thereby allowing differentiation in the germline stem cell (GSC) lineage. In Drosophila ananassae (Fruit fly), this protein is Protein maelstrom 1 (mael1).